Consider the following 60-residue polypeptide: uncharacterized protein (60 aa).

Residues 11-33 (VFTVGFITGGVTPVMVSFVWPAA) form a helical membrane-spanning segment. N-linked (GlcNAc...) asparagine; by host glycosylation is found at N40 and N57.

Its subcellular location is the host membrane. This is an uncharacterized protein from African swine fever virus (strain Badajoz 1971 Vero-adapted) (Ba71V).